The primary structure comprises 351 residues: Centromere-binding protein 1 (351 aa).

An N-acetylmethionine modification is found at Met-1. Polar residues-rich tracts occupy residues 1–10 (MNSLANNNKL), 43–52 (LLSQESNDGN), and 65–77 (KGTQ…GLTS). 3 disordered regions span residues 1–164 (MNSL…TQQS), 196–233 (KKDI…VERR), and 327–351 (YEDM…PHEA). Phosphoserine; by ATM or ATR is present on Ser-45. Residue Ser-48 is modified to Phosphoserine. Ser-84 is subject to Phosphoserine. Polar residues-rich tracts occupy residues 100–124 (VNYT…TNAN) and 138–164 (TPSN…TQQS). Thr-138 is subject to Phosphothreonine. The 49-residue stretch at 222–270 (QRKDSHKEVERRRRENINTAINVLSDLLPVRESSKAAILACAAEYIQKL) folds into the bHLH domain.

As to quaternary structure, binds DNA as a dimer. Associates with MET4 to form a heteromeric complex which also includes MET28.

It localises to the nucleus. The protein localises to the mitochondrion. Its subcellular location is the chromosome. It is found in the centromere. Required for chromosome stability and methionine prototrophy. It is involved in chromosomal segregation. Binds to a highly conserved DNA sequence (5'-RTCACRTG-3'), called CDEI, found in centromeres and in several promoters. DNA-binding activity is enhanced by MET28. Required as an auxiliary factor for transcriptional activation of sulfur metabolism together with MET4 and MET28. This chain is Centromere-binding protein 1 (CBF1), found in Saccharomyces cerevisiae (strain ATCC 204508 / S288c) (Baker's yeast).